The sequence spans 216 residues: 3-isopropylmalate dehydratase small subunit (216 aa).

This sequence belongs to the LeuD family. LeuD type 1 subfamily. As to quaternary structure, heterodimer of LeuC and LeuD.

It carries out the reaction (2R,3S)-3-isopropylmalate = (2S)-2-isopropylmalate. Its pathway is amino-acid biosynthesis; L-leucine biosynthesis; L-leucine from 3-methyl-2-oxobutanoate: step 2/4. In terms of biological role, catalyzes the isomerization between 2-isopropylmalate and 3-isopropylmalate, via the formation of 2-isopropylmaleate. The chain is 3-isopropylmalate dehydratase small subunit from Psychrobacter arcticus (strain DSM 17307 / VKM B-2377 / 273-4).